Consider the following 127-residue polypeptide: Small ribosomal subunit protein bS6 (127 aa).

Positions Glu-106–Glu-117 are enriched in basic and acidic residues. Residues Glu-106 to Ala-127 are disordered. Over residues Val-118 to Ala-127 the composition is skewed to acidic residues.

It belongs to the bacterial ribosomal protein bS6 family.

Binds together with bS18 to 16S ribosomal RNA. The sequence is that of Small ribosomal subunit protein bS6 from Thermotoga neapolitana (strain ATCC 49049 / DSM 4359 / NBRC 107923 / NS-E).